We begin with the raw amino-acid sequence, 206 residues long: VEL1-related protein YOR387C (206 aa).

Positions 1-19 (MSFLNIFTFFSVLVSVATA) are cleaved as a signal peptide. N-linked (GlcNAc...) asparagine glycosylation is found at asparagine 26, asparagine 48, asparagine 91, asparagine 139, asparagine 152, and asparagine 183.

The protein belongs to the VEL1 family. Post-translationally, N-glycosylated.

It is found in the cytoplasm. Its subcellular location is the cytosol. This chain is VEL1-related protein YOR387C, found in Saccharomyces cerevisiae (strain ATCC 204508 / S288c) (Baker's yeast).